We begin with the raw amino-acid sequence, 538 residues long: Phosphoenolpyruvate carboxykinase (ATP) (538 aa).

The substrate site is built by R61, Y195, and K201. ATP-binding positions include K201, H220, and G236–T244. Positions 201 and 220 each coordinate Mn(2+). D257 is a binding site for Mn(2+). The ATP site is built by E285, R323, and T449. R323 serves as a coordination point for substrate.

Belongs to the phosphoenolpyruvate carboxykinase (ATP) family. Requires Mn(2+) as cofactor.

It localises to the cytoplasm. The enzyme catalyses oxaloacetate + ATP = phosphoenolpyruvate + ADP + CO2. It participates in carbohydrate biosynthesis; gluconeogenesis. Functionally, involved in the gluconeogenesis. Catalyzes the conversion of oxaloacetate (OAA) to phosphoenolpyruvate (PEP) through direct phosphoryl transfer between the nucleoside triphosphate and OAA. This chain is Phosphoenolpyruvate carboxykinase (ATP), found in Bradyrhizobium diazoefficiens (strain JCM 10833 / BCRC 13528 / IAM 13628 / NBRC 14792 / USDA 110).